Consider the following 137-residue polypeptide: Small ribosomal subunit protein bS6 (137 aa).

The protein belongs to the bacterial ribosomal protein bS6 family.

Its function is as follows. Binds together with bS18 to 16S ribosomal RNA. This is Small ribosomal subunit protein bS6 from Mycoplasma mycoides subsp. mycoides SC (strain CCUG 32753 / NCTC 10114 / PG1).